We begin with the raw amino-acid sequence, 277 residues long: Large ribosomal subunit protein uL2 (277 aa).

The disordered stretch occupies residues 227 to 277 (VMNPVDHPHGGGEGRTSGGRHPVTPWGVPTKGKKTRSKTKASDRLIMRRRK). The segment covering 266–277 (KASDRLIMRRRK) has biased composition (basic and acidic residues).

Belongs to the universal ribosomal protein uL2 family. As to quaternary structure, part of the 50S ribosomal subunit. Forms a bridge to the 30S subunit in the 70S ribosome.

Its function is as follows. One of the primary rRNA binding proteins. Required for association of the 30S and 50S subunits to form the 70S ribosome, for tRNA binding and peptide bond formation. It has been suggested to have peptidyltransferase activity; this is somewhat controversial. Makes several contacts with the 16S rRNA in the 70S ribosome. The chain is Large ribosomal subunit protein uL2 from Magnetococcus marinus (strain ATCC BAA-1437 / JCM 17883 / MC-1).